The primary structure comprises 358 residues: Sulfate/thiosulfate import ATP-binding protein CysA (358 aa).

One can recognise an ABC transporter domain in the interval 3–237 (IKIENLEKHF…PQTPFVTQFV (235 aa)). Position 35–42 (35–42 (GPSGCGKT)) interacts with ATP.

It belongs to the ABC transporter superfamily. Sulfate/tungstate importer (TC 3.A.1.6) family. As to quaternary structure, the complex is composed of two ATP-binding proteins (CysA), two transmembrane proteins (CysT and CysW) and a solute-binding protein (CysP).

Its subcellular location is the cell inner membrane. The catalysed reaction is sulfate(out) + ATP + H2O = sulfate(in) + ADP + phosphate + H(+). It carries out the reaction thiosulfate(out) + ATP + H2O = thiosulfate(in) + ADP + phosphate + H(+). Part of the ABC transporter complex CysAWTP involved in sulfate/thiosulfate import. Responsible for energy coupling to the transport system. This Mannheimia succiniciproducens (strain KCTC 0769BP / MBEL55E) protein is Sulfate/thiosulfate import ATP-binding protein CysA.